A 221-amino-acid chain; its full sequence is Glutathione peroxidase 6 (221 aa).

An N-terminal signal peptide occupies residues 1-19 (MTQQFWGPCLFSLFMAVLA). The active site involves Cys-73.

The protein belongs to the glutathione peroxidase family. As to expression, expressed in the Bowman glands.

It is found in the secreted. It catalyses the reaction 2 glutathione + H2O2 = glutathione disulfide + 2 H2O. The chain is Glutathione peroxidase 6 (Gpx6) from Rattus norvegicus (Rat).